The following is a 643-amino-acid chain: Threonine--tRNA ligase (643 aa).

The TGS domain maps to 3–64 (DMINITFPDG…QEDGAVEIIT (62 aa)). The tract at residues 245-542 (DHRKLGKELK…LIEEHKGALP (298 aa)) is catalytic. Zn(2+)-binding residues include Cys-338, His-389, and His-519.

The protein belongs to the class-II aminoacyl-tRNA synthetase family. Homodimer. Zn(2+) serves as cofactor.

Its subcellular location is the cytoplasm. The catalysed reaction is tRNA(Thr) + L-threonine + ATP = L-threonyl-tRNA(Thr) + AMP + diphosphate + H(+). Its function is as follows. Catalyzes the attachment of threonine to tRNA(Thr) in a two-step reaction: L-threonine is first activated by ATP to form Thr-AMP and then transferred to the acceptor end of tRNA(Thr). Also edits incorrectly charged L-seryl-tRNA(Thr). This is Threonine--tRNA ligase from Bacillus velezensis (strain DSM 23117 / BGSC 10A6 / LMG 26770 / FZB42) (Bacillus amyloliquefaciens subsp. plantarum).